We begin with the raw amino-acid sequence, 410 residues long: Probable tRNA sulfurtransferase (410 aa).

A THUMP domain is found at 58–167; the sequence is AELTRRLQEV…RREIFVSVER (110 aa). Residues 185–186, 210–211, arginine 267, glycine 289, and glutamine 298 contribute to the ATP site; these read LL and HF.

This sequence belongs to the ThiI family.

It localises to the cytoplasm. The catalysed reaction is [ThiI sulfur-carrier protein]-S-sulfanyl-L-cysteine + a uridine in tRNA + 2 reduced [2Fe-2S]-[ferredoxin] + ATP + H(+) = [ThiI sulfur-carrier protein]-L-cysteine + a 4-thiouridine in tRNA + 2 oxidized [2Fe-2S]-[ferredoxin] + AMP + diphosphate. It catalyses the reaction [ThiS sulfur-carrier protein]-C-terminal Gly-Gly-AMP + S-sulfanyl-L-cysteinyl-[cysteine desulfurase] + AH2 = [ThiS sulfur-carrier protein]-C-terminal-Gly-aminoethanethioate + L-cysteinyl-[cysteine desulfurase] + A + AMP + 2 H(+). It functions in the pathway cofactor biosynthesis; thiamine diphosphate biosynthesis. Its function is as follows. Catalyzes the ATP-dependent transfer of a sulfur to tRNA to produce 4-thiouridine in position 8 of tRNAs, which functions as a near-UV photosensor. Also catalyzes the transfer of sulfur to the sulfur carrier protein ThiS, forming ThiS-thiocarboxylate. This is a step in the synthesis of thiazole, in the thiamine biosynthesis pathway. The sulfur is donated as persulfide by IscS. This is Probable tRNA sulfurtransferase from Nocardia farcinica (strain IFM 10152).